Here is a 120-residue protein sequence, read N- to C-terminus: UPF0102 protein COXBURSA331_A1934 (120 aa).

Belongs to the UPF0102 family.

This Coxiella burnetii (strain RSA 331 / Henzerling II) protein is UPF0102 protein COXBURSA331_A1934.